A 317-amino-acid polypeptide reads, in one-letter code: Cell division protein FtsX (317 aa).

The Cytoplasmic segment spans residues 1–39 (MAIVRHKQPPLRRFMMYWVDHARQAFSSLGELWRNPLAS). A helical transmembrane segment spans residues 40–60 (LMTLAVLGVSLALPSCFHVLL). Over 61-188 (KNAEVVEGSW…LQGIMNLLRH (128 aa)) the chain is Periplasmic. A helical membrane pass occupies residues 189-209 (TITGIAVLLLSAVLLIVGNTL). Over 210–241 (RLNILNQRSEIEVLKLVGATDAFIHRPFLYTG) the chain is Cytoplasmic. A helical membrane pass occupies residues 242 to 262 (IWFGVIGGMLAWWLTEVMVIW). Residues 263-280 (SEGVVNELAGLYNSNFRL) are Periplasmic-facing. Residues 281 to 301 (VGMGAVDGINLILLGALLGLI) traverse the membrane as a helical segment. The Cytoplasmic segment spans residues 302 to 317 (ASWFSVHRHIRDIEPS).

Belongs to the ABC-4 integral membrane protein family. FtsX subfamily. Forms a membrane-associated complex with FtsE.

The protein localises to the cell inner membrane. In terms of biological role, part of the ABC transporter FtsEX involved in cellular division. Encoded in an operon consisting of genes ftsY, ftsE and ftsX. The sequence is that of Cell division protein FtsX from Aeromonas hydrophila.